The primary structure comprises 343 residues: N-acetyl-gamma-glutamyl-phosphate reductase (343 aa).

Cysteine 149 is an active-site residue.

The protein belongs to the NAGSA dehydrogenase family. Type 1 subfamily.

The protein localises to the cytoplasm. It carries out the reaction N-acetyl-L-glutamate 5-semialdehyde + phosphate + NADP(+) = N-acetyl-L-glutamyl 5-phosphate + NADPH + H(+). It functions in the pathway amino-acid biosynthesis; L-arginine biosynthesis; N(2)-acetyl-L-ornithine from L-glutamate: step 3/4. Catalyzes the NADPH-dependent reduction of N-acetyl-5-glutamyl phosphate to yield N-acetyl-L-glutamate 5-semialdehyde. In Methanococcus maripaludis (strain C6 / ATCC BAA-1332), this protein is N-acetyl-gamma-glutamyl-phosphate reductase.